Consider the following 27-residue polypeptide: MQLFHLCLIISCSCPTVQASKLCLGWL.

This chain is Truncated HBeAg protein (C), found in Hepatitis B virus genotype C subtype ayw (isolate Australia/AustRC/1992) (HBV-C).